A 420-amino-acid chain; its full sequence is L-cysteine:1D-myo-inositol 2-amino-2-deoxy-alpha-D-glucopyranoside ligase (420 aa).

Residue Cys-48 participates in Zn(2+) binding. L-cysteinyl-5'-AMP-binding positions include 48-51 (CGIT), Thr-63, and 86-88 (NIT). Residues 50-60 (ITPYDSTHLGH) carry the 'HIGH' region motif. The 'ERGGDP' region motif lies at 192–197 (ERGGDP). Trp-232 is an L-cysteinyl-5'-AMP binding site. Cys-236 lines the Zn(2+) pocket. 254–256 (GSD) contributes to the L-cysteinyl-5'-AMP binding site. His-261 provides a ligand contact to Zn(2+). Residue Ile-288 coordinates L-cysteinyl-5'-AMP. The 'KMSKS' region motif lies at 294-298 (KMSKS).

Belongs to the class-I aminoacyl-tRNA synthetase family. MshC subfamily. In terms of assembly, monomer. Zn(2+) is required as a cofactor.

It catalyses the reaction 1D-myo-inositol 2-amino-2-deoxy-alpha-D-glucopyranoside + L-cysteine + ATP = 1D-myo-inositol 2-(L-cysteinylamino)-2-deoxy-alpha-D-glucopyranoside + AMP + diphosphate + H(+). Its function is as follows. Catalyzes the ATP-dependent condensation of GlcN-Ins and L-cysteine to form L-Cys-GlcN-Ins. This is L-cysteine:1D-myo-inositol 2-amino-2-deoxy-alpha-D-glucopyranoside ligase from Corynebacterium glutamicum (strain R).